The following is a 179-amino-acid chain: PP2C-like domain-containing protein R307 (179 aa).

The region spanning 1–176 (MNESKRENIQ…DNVSVIIIFF (176 aa)) is the PPM-type phosphatase domain.

The protein localises to the virion. The protein is PP2C-like domain-containing protein R307 of Acanthamoeba polyphaga mimivirus (APMV).